Here is a 205-residue protein sequence, read N- to C-terminus: Urease accessory protein UreE (205 aa).

Positions 170 to 192 (EHHGHSHSHSHDHDHDHDHDHQH) are enriched in basic and acidic residues. The interval 170–205 (EHHGHSHSHSHDHDHDHDHDHQHGPCCSHGHHHGHR) is disordered.

This sequence belongs to the UreE family.

It is found in the cytoplasm. Its function is as follows. Involved in urease metallocenter assembly. Binds nickel. Probably functions as a nickel donor during metallocenter assembly. In Burkholderia pseudomallei (strain 668), this protein is Urease accessory protein UreE.